The sequence spans 329 residues: NADH-quinone oxidoreductase subunit H (329 aa).

8 consecutive transmembrane segments (helical) span residues 11 to 31 (IVVAILKAIVILLVVVVCGAL), 81 to 101 (LIFTLAPIVAMSALLMAFAVV), 114 to 134 (IGLLFFFAMAGLAVYAVLFAG), 154 to 174 (ISYEVFMALALMGIVAQTGSF), 187 to 207 (TWFIIPQFLGFCTFFIAGVAV), 238 to 258 (FFVGEYIGIVLISALLVTLFF), 270 to 290 (QLSFIWFALKTAFFIMLFILL), and 309 to 329 (FCLPLTLLNLLVTGAFVLAAQ).

This sequence belongs to the complex I subunit 1 family. In terms of assembly, NDH-1 is composed of 13 different subunits. Subunits NuoA, H, J, K, L, M, N constitute the membrane sector of the complex.

The protein resides in the cell inner membrane. The enzyme catalyses a quinone + NADH + 5 H(+)(in) = a quinol + NAD(+) + 4 H(+)(out). Functionally, NDH-1 shuttles electrons from NADH, via FMN and iron-sulfur (Fe-S) centers, to quinones in the respiratory chain. The immediate electron acceptor for the enzyme in this species is believed to be ubiquinone. Couples the redox reaction to proton translocation (for every two electrons transferred, four hydrogen ions are translocated across the cytoplasmic membrane), and thus conserves the redox energy in a proton gradient. This subunit may bind ubiquinone. The protein is NADH-quinone oxidoreductase subunit H of Azotobacter vinelandii (strain DJ / ATCC BAA-1303).